We begin with the raw amino-acid sequence, 664 residues long: MSDAVPQVGSQFGPYQLLRLLGRGGMGEVYEAEDTRKHRVVALKLISPQYSDNAVFRARMQREADTAGRLTEPHIVPIHDYGEINGQFFVEMRMIDGTSLRALLKQYGPLTPARAVAIVRQIAAALDAAHANGVTHRDVKPENILVTASDFAYLVDFGIARAASDPGLTQTGTAVGTYNYMAPERFTGDEVTYRADIYALACVLGECLTGAPPYRADSVERLIAAHLMDPAPQPSQLRPGRVPPALDQVIAKGMAKNPAERFMSAGDLAIAAHDALTTSEQHQATTILRRGDNATLLATPADTGLSQSESGIAGAGTGPPTPGAARWSPGDSATVAGPLAADSRGGNWPSQTGHSPAVPNALQASLGHAVPPAGNKRKVWAVVGAAAIVLVAIVAAAGYLVLRPSWSPTQASGQTVLPFTGIDFRLSPSGVAVDSAGNVYVTSEGMYGRVVKLATGSTGTTVLPFNGLYQPQGLAVDGAGTVYVTDFNNRVVTLAAGSNNQTVLPFDGLNYPEGLAVDTQGAVYVADRGNNRVVKLAAGSKTQTVLPFTGLNDPDGVAVDNSGNVYVTDTDNNRVVKLEAESNNQVVLPFTDITAPWGIAVDEAGTVYVTEHNTNQVVKLLAGSTTSTVLPFTGLNTPLAVAVDSDRTVYVADRGNDRVVKLTS.

Over 1-381 (MSDAVPQVGS…PAGNKRKVWA (381 aa)) the chain is Cytoplasmic. The Protein kinase domain maps to 15-276 (YQLLRLLGRG…DLAIAAHDAL (262 aa)). ATP contacts are provided by residues 21–29 (LGRGGMGEV) and K44. The residue at position 135 (T135) is a Phosphothreonine; by autocatalysis. D138 serves as the catalytic Proton acceptor. Phosphothreonine; by autocatalysis occurs at positions 169, 171, 173, and 209. The disordered stretch occupies residues 303 to 333 (TGLSQSESGIAGAGTGPPTPGAARWSPGDSA). The chain crosses the membrane as a helical span at residues 382-402 (VVGAAAIVLVAIVAAAGYLVL). Topologically, residues 403–664 (RPSWSPTQAS…GNDRVVKLTS (262 aa)) are extracellular. 6 NHL repeats span residues 414-456 (QTVL…LATG), 457-497 (STGT…LAAG), 498-539 (SNNQ…LAAG), 540-581 (SKTQ…LEAE), 582-623 (SNNQ…LLAG), and 624-664 (STTS…KLTS).

Belongs to the protein kinase superfamily. Ser/Thr protein kinase family. In terms of assembly, homodimer. The extracellular domain interacts with host laminin. Autophosphorylated. Dephosphorylated by PstP.

It localises to the cell membrane. It carries out the reaction L-seryl-[protein] + ATP = O-phospho-L-seryl-[protein] + ADP + H(+). It catalyses the reaction L-threonyl-[protein] + ATP = O-phospho-L-threonyl-[protein] + ADP + H(+). With respect to regulation, dimerization activates the kinase domain of unphosphorylated PknD via an allosteric mechanism, triggering autophosphorylation and phosphorylation of target proteins. Phosphorylated PknD is fully active even in the absence of dimerization. Functionally, part of a signaling pathway that enables adaptation to osmotic stress through cell wall remodeling and virulence factor production. Key microbial factor required for central nervous system tuberculosis. Required for invasion of host brain endothelia, but not macrophages, lung epithelia or other endothelia. The protein is Serine/threonine-protein kinase PknD (pknD) of Mycobacterium tuberculosis (strain CDC 1551 / Oshkosh).